Here is a 378-residue protein sequence, read N- to C-terminus: Carbamoyl phosphate synthase small chain (378 aa).

Positions Met-1–Glu-189 are CPSase. Residues Ser-47, Gly-241, and Gly-243 each coordinate L-glutamine. The 186-residue stretch at His-193 to Arg-378 folds into the Glutamine amidotransferase type-1 domain. The Nucleophile role is filled by Cys-269. Residues Leu-270, Gln-273, Asn-311, Gly-313, and Phe-314 each contribute to the L-glutamine site. Active-site residues include His-353 and Glu-355.

This sequence belongs to the CarA family. As to quaternary structure, composed of two chains; the small (or glutamine) chain promotes the hydrolysis of glutamine to ammonia, which is used by the large (or ammonia) chain to synthesize carbamoyl phosphate. Tetramer of heterodimers (alpha,beta)4.

It carries out the reaction hydrogencarbonate + L-glutamine + 2 ATP + H2O = carbamoyl phosphate + L-glutamate + 2 ADP + phosphate + 2 H(+). The enzyme catalyses L-glutamine + H2O = L-glutamate + NH4(+). The protein operates within amino-acid biosynthesis; L-arginine biosynthesis; carbamoyl phosphate from bicarbonate: step 1/1. Its pathway is pyrimidine metabolism; UMP biosynthesis via de novo pathway; (S)-dihydroorotate from bicarbonate: step 1/3. Small subunit of the glutamine-dependent carbamoyl phosphate synthetase (CPSase). CPSase catalyzes the formation of carbamoyl phosphate from the ammonia moiety of glutamine, carbonate, and phosphate donated by ATP, constituting the first step of 2 biosynthetic pathways, one leading to arginine and/or urea and the other to pyrimidine nucleotides. The small subunit (glutamine amidotransferase) binds and cleaves glutamine to supply the large subunit with the substrate ammonia. In Pseudomonas syringae pv. tomato (strain ATCC BAA-871 / DC3000), this protein is Carbamoyl phosphate synthase small chain.